We begin with the raw amino-acid sequence, 312 residues long: Olfactory receptor 2T10 (312 aa).

Topologically, residues 1-25 (MRLANQTLGGDFFLLGIFSQISHPG) are extracellular. The N-linked (GlcNAc...) asparagine glycan is linked to asparagine 5. The chain crosses the membrane as a helical span at residues 26–49 (RLCLLIFSIFLMAVSWNITLILLI). Residues 50-57 (HIDSSLHT) are Cytoplasmic-facing. Residues 58-79 (PMYFFINQLSLIDLTYISVTVP) traverse the membrane as a helical segment. Residues 80-100 (KMLVNQLAKDKTISVLGCGTQ) lie on the Extracellular side of the membrane. Cysteines 97 and 189 form a disulfide. The helical transmembrane segment at 101–120 (MYFYLQLGGAECCLLAAMAY) threads the bilayer. At 121–139 (DRYVAICHPLRYSVLMSHR) the chain is on the cytoplasmic side. Residues 140–158 (VCLLLASGCWFVGSVDGFM) form a helical membrane-spanning segment. Topologically, residues 159–195 (LTPIAMSFPFCRSHEIQHFFCEVPAVLKLSCSDTSLY) are extracellular. Residues 196–219 (KIFMYLCCVIMLLIPVTVISVSYY) traverse the membrane as a helical segment. Residues 220-236 (YIILTIHKMNSVEGRKK) are Cytoplasmic-facing. Residues 237–259 (AFTTCSSHITVVSLFYGAAIYNY) traverse the membrane as a helical segment. Over 260-272 (MLPSSYQTPEKDM) the chain is Extracellular. Residues 273 to 292 (MSSFFYTILTPVLNPIIYSF) form a helical membrane-spanning segment. Residues 293–312 (RNKDVTRALKKMLSVQKPPY) lie on the Cytoplasmic side of the membrane.

The protein belongs to the G-protein coupled receptor 1 family.

The protein localises to the cell membrane. Its function is as follows. Odorant receptor. The chain is Olfactory receptor 2T10 (OR2T10) from Homo sapiens (Human).